The chain runs to 613 residues: Probable indole-3-acetic acid-amido synthetase GH3.12 (613 aa).

The protein belongs to the IAA-amido conjugating enzyme family. In terms of tissue distribution, expressed in roots.

May catalyze the synthesis of indole-3-acetic acid (IAA)-amino acid conjugates, providing a mechanism for the plant to cope with the presence of excess auxin. The polypeptide is Probable indole-3-acetic acid-amido synthetase GH3.12 (GH3.12) (Oryza sativa subsp. japonica (Rice)).